The primary structure comprises 547 residues: MVQIKILVNCALPYANGPLHIGHIAGAYLGADVFVRYNRLMGNQVLYVSGSDEYGTPITVRAEKEGRSPKEIADIYYEEHLRTFENLGISFDIFMRTTWPEHSENAQDFFIKLLNEGYIEKGTMIAPFCRKIGRFMPDRYIEGTCPYCHYPKARGDQCDNCGRTLDPQDLIDPKCILSGETPEFRETEHFFLRLDLLEDRLKSWISSKNFWKPNVLAYTQNFISGGLKKRPITRDIDWGVKIPLDGYDSKRIYVWFEALIGYITGAKEYSKRTGNPDLWKEYYMDPEVRNYYFIGKDNIPFHAIIWPAMLMGYGGFNLPYDIPANEYLTFKGQQFSKSRGIGYSVDDLLKAVPADYLRYYVASILPETGDSDFSLEELVNTVNSDLIDKYGNLVYRILSFMDRYSINPDPVDVSGDEEFKYAQRSFELWSEDLSGVHVKRGLLRWLDLAIYANGFFNRSEPWKTIKNDRQKLNHDLYLSLKITEVLTVMVYPYIPSSAEKIWNMLGIPFAIGQSYRHLYEMHAFSVHRGAIPFEKIDLESLVSKLNN.

Residues 13 to 23 carry the 'HIGH' region motif; the sequence is PYANGPLHIGH. Zn(2+) contacts are provided by cysteine 145, cysteine 148, cysteine 158, and cysteine 161. A 'KMSKS' region motif is present at residues 334–338; it reads QFSKS. ATP is bound at residue lysine 337.

Belongs to the class-I aminoacyl-tRNA synthetase family. MetG type 1 subfamily. Zn(2+) is required as a cofactor.

It is found in the cytoplasm. The enzyme catalyses tRNA(Met) + L-methionine + ATP = L-methionyl-tRNA(Met) + AMP + diphosphate. Is required not only for elongation of protein synthesis but also for the initiation of all mRNA translation through initiator tRNA(fMet) aminoacylation. In Thermoplasma acidophilum (strain ATCC 25905 / DSM 1728 / JCM 9062 / NBRC 15155 / AMRC-C165), this protein is Methionine--tRNA ligase.